The following is a 373-amino-acid chain: UDP-N-acetylglucosamine--N-acetylmuramyl-(pentapeptide) pyrophosphoryl-undecaprenol N-acetylglucosamine transferase (373 aa).

Residues 10–12, Asn-124, Ser-195, and Gln-297 contribute to the UDP-N-acetyl-alpha-D-glucosamine site; that span reads TGG.

It belongs to the glycosyltransferase 28 family. MurG subfamily.

It is found in the cell membrane. The enzyme catalyses Mur2Ac(oyl-L-Ala-gamma-D-Glu-L-Lys-D-Ala-D-Ala)-di-trans,octa-cis-undecaprenyl diphosphate + UDP-N-acetyl-alpha-D-glucosamine = beta-D-GlcNAc-(1-&gt;4)-Mur2Ac(oyl-L-Ala-gamma-D-Glu-L-Lys-D-Ala-D-Ala)-di-trans,octa-cis-undecaprenyl diphosphate + UDP + H(+). It functions in the pathway cell wall biogenesis; peptidoglycan biosynthesis. Functionally, cell wall formation. Catalyzes the transfer of a GlcNAc subunit on undecaprenyl-pyrophosphoryl-MurNAc-pentapeptide (lipid intermediate I) to form undecaprenyl-pyrophosphoryl-MurNAc-(pentapeptide)GlcNAc (lipid intermediate II). The protein is UDP-N-acetylglucosamine--N-acetylmuramyl-(pentapeptide) pyrophosphoryl-undecaprenol N-acetylglucosamine transferase of Oenococcus oeni (strain ATCC BAA-331 / PSU-1).